The primary structure comprises 805 residues: H(+)/Cl(-) exchange transporter 7 (805 aa).

The tract at residues 1 to 49 (MANVSKKVSWSGRDRDDEEAAPLLRRTARPGGGTPLLNGAGPGAARQSP) is disordered. Residues 1 to 126 (MANVSKKVSW…TAFRTVEIKR (126 aa)) are Cytoplasmic-facing. Residues Ser-9 and Ser-60 each carry the phosphoserine modification. The next 2 helical transmembrane spans lie at 127-159 (WVIC…YRVI) and 174-197 (FSLL…VAFI). Residues 203-207 (GSGIP) carry the Selectivity filter part_1 motif. Ser-204 provides a ligand contact to chloride. Positions 206-213 (IPQIKCFL) form an intramembrane region, helical. A run of 2 helical transmembrane segments spans residues 223-241 (RLKT…VVGG) and 247-264 (EGPM…ISQG). A Selectivity filter part_2 motif is present at residues 245–249 (GKEGP). 2 intramembrane regions (helical) span residues 288 to 300 (FVSA…VSAA) and 304 to 312 (PVGGVLFSL). 5 consecutive transmembrane segments (helical) span residues 322-341 (FLTW…LNFV), 375-405 (IPVF…FRIR), 410-432 (PCLQ…FVLI), 487-507 (PLTL…TYGL), and 512-535 (GVFI…LSYL). The Selectivity filter part_3 signature appears at 512-516 (GVFIP). A chloride-binding site is contributed by Phe-514. An intramembrane region (helical) is located at residues 545-559 (GKYALMGAAAQLGGI). Residues 560–562 (VRM) constitute an intramembrane region (note=Loop between two helices). Positions 563–574 (TLSLTVIMMEAT) form an intramembrane region, helical. An intramembrane region (note=Loop between two helices) is located at residues 575-578 (SNVT). The chain crosses the membrane as a helical span at residues 579 to 597 (YGFPIMLVLMTAKIVGDVF). At 598–805 (IEGLYDMHIQ…GLEELSLAQT (208 aa)) the chain is on the cytoplasmic side. A chloride-binding site is contributed by Tyr-602. 2 consecutive CBS domains span residues 631–695 (MSTP…VFVE) and 741–799 (MNPS…GLEE). ATP is bound by residues 658 to 660 (HNG) and 783 to 786 (TRKD). Ser-801 carries the post-translational modification Phosphoserine.

This sequence belongs to the chloride channel (TC 2.A.49) family. ClC-7/CLCN7 subfamily. As to quaternary structure, chloride channel 7 are heteromers of alpha (CLCN7) and beta (OSTM1) subunits. As to expression, brain and kidney.

The protein localises to the lysosome membrane. It carries out the reaction 2 chloride(in) + H(+)(out) = 2 chloride(out) + H(+)(in). Slowly voltage-gated channel mediating the exchange of chloride ions against protons. Functions as antiporter and contributes to the acidification of the lysosome lumen and may be involved in maintaining lysosomal pH. The CLC channel family contains both chloride channels and proton-coupled anion transporters that exchange chloride or another anion for protons. The presence of conserved gating glutamate residues is typical for family members that function as antiporters. This chain is H(+)/Cl(-) exchange transporter 7, found in Homo sapiens (Human).